The chain runs to 318 residues: Thymidylate synthase (318 aa).

Residues arginine 25 and 180-181 contribute to the dUMP site; that span reads RR. The Nucleophile role is filled by cysteine 200. DUMP-binding positions include 220–223, asparagine 231, and 261–263; these read RSGD and HIY. Aspartate 223 is a (6R)-5,10-methylene-5,6,7,8-tetrahydrofolate binding site. Residue alanine 317 coordinates (6R)-5,10-methylene-5,6,7,8-tetrahydrofolate.

The protein belongs to the thymidylate synthase family. Bacterial-type ThyA subfamily. In terms of assembly, homodimer.

It localises to the cytoplasm. It carries out the reaction dUMP + (6R)-5,10-methylene-5,6,7,8-tetrahydrofolate = 7,8-dihydrofolate + dTMP. Its pathway is pyrimidine metabolism; dTTP biosynthesis. In terms of biological role, catalyzes the reductive methylation of 2'-deoxyuridine-5'-monophosphate (dUMP) to 2'-deoxythymidine-5'-monophosphate (dTMP) while utilizing 5,10-methylenetetrahydrofolate (mTHF) as the methyl donor and reductant in the reaction, yielding dihydrofolate (DHF) as a by-product. This enzymatic reaction provides an intracellular de novo source of dTMP, an essential precursor for DNA biosynthesis. The polypeptide is Thymidylate synthase (Lactobacillus johnsonii (strain CNCM I-12250 / La1 / NCC 533)).